Reading from the N-terminus, the 354-residue chain is MATKEEKNKALAAALGQIEKQFGKGSIMKLGDTQALDVEAVSTGSLSLDVALGIGGLPMGRIVEIFGPESSGKTTLTLSVIAQAQKEGKTCAFIDAEHALDPIYAAKLGVNVNELLVSQPDNGEQALEICDALVRSGAVDVIIVDSVAALTPKAEIEGEMGDSHMGLQARLMSQALRKLTGQIKNSNCLVVFINQIRMKIGVMFGNPETTTGGNALKFYASVRLDIRRTGAIKEGEEVIGNETRVKVVKNKVAAPFRQVDFQILYGQGISKTGELIELGVKHKLVDKAGAWYAYNGEKIGQGKANAMKWLEEHPEEALALETKLRNELLANPEKVLAADIAEKNESSTGLEADY.

67-74 (GPESSGKT) lines the ATP pocket.

It belongs to the RecA family.

It localises to the cytoplasm. Functionally, can catalyze the hydrolysis of ATP in the presence of single-stranded DNA, the ATP-dependent uptake of single-stranded DNA by duplex DNA, and the ATP-dependent hybridization of homologous single-stranded DNAs. It interacts with LexA causing its activation and leading to its autocatalytic cleavage. The chain is Protein RecA from Pasteurella multocida (strain Pm70).